Here is a 278-residue protein sequence, read N- to C-terminus: Shikimate dehydrogenase (NADP(+)) (278 aa).

Residues 19–21 (SLS) and Thr66 each bind shikimate. The active-site Proton acceptor is Lys70. Residue Asp82 coordinates NADP(+). Residues Asn91 and Asp107 each contribute to the shikimate site. Residues 133–137 (GSGGA), 157–162 (NRTRAR), and Ile222 each bind NADP(+). Tyr224 contributes to the shikimate binding site. Gly245 is a binding site for NADP(+).

The protein belongs to the shikimate dehydrogenase family. As to quaternary structure, homodimer.

The enzyme catalyses shikimate + NADP(+) = 3-dehydroshikimate + NADPH + H(+). Its pathway is metabolic intermediate biosynthesis; chorismate biosynthesis; chorismate from D-erythrose 4-phosphate and phosphoenolpyruvate: step 4/7. Its function is as follows. Involved in the biosynthesis of the chorismate, which leads to the biosynthesis of aromatic amino acids. Catalyzes the reversible NADPH linked reduction of 3-dehydroshikimate (DHSA) to yield shikimate (SA). The protein is Shikimate dehydrogenase (NADP(+)) of Jannaschia sp. (strain CCS1).